The sequence spans 427 residues: Serine--tRNA ligase (427 aa).

231-233 (TAE) provides a ligand contact to L-serine. Residue 262–264 (RSE) participates in ATP binding. Glutamate 285 serves as a coordination point for L-serine. Residue 349–352 (EISS) coordinates ATP. Serine 385 lines the L-serine pocket.

It belongs to the class-II aminoacyl-tRNA synthetase family. Type-1 seryl-tRNA synthetase subfamily. As to quaternary structure, homodimer. The tRNA molecule binds across the dimer.

Its subcellular location is the cytoplasm. It catalyses the reaction tRNA(Ser) + L-serine + ATP = L-seryl-tRNA(Ser) + AMP + diphosphate + H(+). The enzyme catalyses tRNA(Sec) + L-serine + ATP = L-seryl-tRNA(Sec) + AMP + diphosphate + H(+). It participates in aminoacyl-tRNA biosynthesis; selenocysteinyl-tRNA(Sec) biosynthesis; L-seryl-tRNA(Sec) from L-serine and tRNA(Sec): step 1/1. Catalyzes the attachment of serine to tRNA(Ser). Is also able to aminoacylate tRNA(Sec) with serine, to form the misacylated tRNA L-seryl-tRNA(Sec), which will be further converted into selenocysteinyl-tRNA(Sec). The polypeptide is Serine--tRNA ligase (Listeria monocytogenes serotype 4b (strain CLIP80459)).